The sequence spans 323 residues: ADP-L-glycero-D-manno-heptose-6-epimerase (323 aa).

Residues 10–11 (FI), 31–32 (DN), Lys-38, Arg-53, 75–79 (MGACS), and Asn-92 each bind NADP(+). The Proton acceptor role is filled by Tyr-143. NADP(+) is bound at residue Lys-147. Asn-170 lines the substrate pocket. NADP(+)-binding residues include Val-171 and Lys-179. Lys-179 functions as the Proton acceptor in the catalytic mechanism. Substrate is bound by residues Asp-181, Lys-188, 202-205 (FRSC), Arg-216, and Tyr-281.

It belongs to the NAD(P)-dependent epimerase/dehydratase family. HldD subfamily. Homopentamer. Requires NADP(+) as cofactor.

The enzyme catalyses ADP-D-glycero-beta-D-manno-heptose = ADP-L-glycero-beta-D-manno-heptose. It participates in nucleotide-sugar biosynthesis; ADP-L-glycero-beta-D-manno-heptose biosynthesis; ADP-L-glycero-beta-D-manno-heptose from D-glycero-beta-D-manno-heptose 7-phosphate: step 4/4. Functionally, catalyzes the interconversion between ADP-D-glycero-beta-D-manno-heptose and ADP-L-glycero-beta-D-manno-heptose via an epimerization at carbon 6 of the heptose. The polypeptide is ADP-L-glycero-D-manno-heptose-6-epimerase (Nitratidesulfovibrio vulgaris (strain ATCC 29579 / DSM 644 / CCUG 34227 / NCIMB 8303 / VKM B-1760 / Hildenborough) (Desulfovibrio vulgaris)).